A 172-amino-acid polypeptide reads, in one-letter code: Phosphopantetheine adenylyltransferase (172 aa).

Thr14 is a binding site for substrate. ATP contacts are provided by residues 14-15 (TF) and His22. Residues Lys46, Leu78, and Arg92 each coordinate substrate. ATP-binding positions include 93-95 (GLR), Glu103, and 128-134 (WLYISST).

Belongs to the bacterial CoaD family. Homohexamer. Mg(2+) is required as a cofactor.

Its subcellular location is the cytoplasm. It catalyses the reaction (R)-4'-phosphopantetheine + ATP + H(+) = 3'-dephospho-CoA + diphosphate. It functions in the pathway cofactor biosynthesis; coenzyme A biosynthesis; CoA from (R)-pantothenate: step 4/5. Functionally, reversibly transfers an adenylyl group from ATP to 4'-phosphopantetheine, yielding dephospho-CoA (dPCoA) and pyrophosphate. The polypeptide is Phosphopantetheine adenylyltransferase (Lawsonia intracellularis (strain PHE/MN1-00)).